Reading from the N-terminus, the 58-residue chain is MSKFYKIWLVFDPRRVFVAQGVFLFLLAVLIHLILLSTPAFNWLTVATAKHGYVAAAQ.

Residues 1 to 15 (MSKFYKIWLVFDPRR) are Cytoplasmic-facing. A helical membrane pass occupies residues 16–36 (VFVAQGVFLFLLAVLIHLILL). His-32 is an a bacteriochlorophyll binding site. Topologically, residues 37–58 (STPAFNWLTVATAKHGYVAAAQ) are periplasmic.

Belongs to the antenna complex alpha subunit family. The core complex is formed by different alpha and beta chains, binding bacteriochlorophyll molecules, and arranged most probably in tetrameric structures disposed around the reaction center. The non-pigmented gamma chains may constitute additional components.

The protein localises to the cell inner membrane. In terms of biological role, antenna complexes are light-harvesting systems, which transfer the excitation energy to the reaction centers. The chain is Light-harvesting protein B-870 alpha chain (pufA) from Rhodobacter capsulatus (Rhodopseudomonas capsulata).